Consider the following 233-residue polypeptide: Small ribosomal subunit protein uS3 (233 aa).

Positions 39-107 constitute a KH type-2 domain; it reads IRTFLKRKLY…EVNINIKEER (69 aa). A disordered region spans residues 211-233; the sequence is GVQPEKTEESAPAKKPRRARRGK. A compositionally biased stretch (basic and acidic residues) spans 213–222; it reads QPEKTEESAP. The span at 224-233 shows a compositional bias: basic residues; the sequence is KKPRRARRGK.

This sequence belongs to the universal ribosomal protein uS3 family. As to quaternary structure, part of the 30S ribosomal subunit. Forms a tight complex with proteins S10 and S14.

In terms of biological role, binds the lower part of the 30S subunit head. Binds mRNA in the 70S ribosome, positioning it for translation. The protein is Small ribosomal subunit protein uS3 of Campylobacter lari (strain RM2100 / D67 / ATCC BAA-1060).